We begin with the raw amino-acid sequence, 2670 residues long: Inositol 1,4,5-trisphosphate-gated calcium channel ITPR3 (2670 aa).

The Cytoplasmic portion of the chain corresponds to 1-2233 (MNEMSSFLHI…YVEGASTGVL (2233 aa)). MIR domains lie at 113-173 (GDVV…LRSN), 174-224 (GDNV…INLF), 232-288 (EEVL…VEVV), 295-372 (GGAG…LDPT), and 378-434 (DSFV…IVSV). 1D-myo-inositol 1,4,5-trisphosphate is bound by residues Arg-266, Leu-269, and Arg-270. Positions 503, 507, 510, 567, 568, and 569 each coordinate 1D-myo-inositol 1,4,5-trisphosphate. Arg-743 provides a ligand contact to Ca(2+). A phosphoserine mark is found at Ser-916 and Ser-934. Residues Glu-1122 and Glu-1125 each contribute to the Ca(2+) site. The segment covering 1138–1153 (EVEAGATKDKKERPSD) has biased composition (basic and acidic residues). 2 disordered regions span residues 1138–1164 (EVEA…HGEK) and 1807–1835 (NMSD…SFSM). A phosphoserine mark is found at Ser-1813, Ser-1832, and Ser-1834. 2 residues coordinate Ca(2+): Glu-1881 and Glu-1945. Ala-1995, Glu-2148, and Lys-2151 together coordinate ATP. A helical transmembrane segment spans residues 2234-2254 (GSPLISLLFWILICFSIAALF). The Extracellular portion of the chain corresponds to 2255–2262 (TKRYSVRP). A helical transmembrane segment spans residues 2263-2283 (LIVALILRSIYYLGIGPTLNI). Residues 2284 to 2292 (LGALNLTNK) lie on the Cytoplasmic side of the membrane. A helical transmembrane segment spans residues 2293–2310 (IVFVVSFVGNRGTFIRGY). At 2311 to 2324 (KAMVMDMEFLYHVG) the chain is on the extracellular side. Residues 2325–2345 (YILTSVLGLFAHELFYSILLF) traverse the membrane as a helical segment. Over 2346–2367 (DLIYREETLFNVIKSVTRNGRS) the chain is Cytoplasmic. Residues 2368–2388 (ILLTALLALILVYLFSIVGFL) form a helical membrane-spanning segment. At 2389-2495 (FLKDDFILEV…ESLFPARVVY (107 aa)) the chain is on the extracellular side. Cys-2454 and Cys-2460 are disulfide-bonded. Residues 2496–2516 (DLLFFFIVIIIVLNLIFGVII) traverse the membrane as a helical segment. The Cytoplasmic segment spans residues 2517–2670 (DTFADLRSEK…FVDVQNCMSR (154 aa)). Residues Cys-2537 and Phe-2538 each contribute to the ATP site. Cys-2537 is a binding site for Zn(2+). The Zn(2+) site is built by Cys-2540 and His-2557. Positions 2559, 2562, 2563, and 2564 each coordinate ATP. His-2562 provides a ligand contact to Zn(2+). Thr-2580 is a Ca(2+) binding site. Residues Ser-2608 and Ser-2669 each carry the phosphoserine modification.

It belongs to the InsP3 receptor family. Homodimer. Homotetramer. Interacts with TRPC1, TRPC3, TRPC4. Interacts with TRPV4. Interacts with SIGMAR1. Found in a complex with AKT1 and PML; this interaction modulates IP3R3-phosphorylation and in turn ITPR3-dependent calcium release. Interacts with IRAG2 (via coiled-coil domain). Interacts with CABP1. Interacts with TMBIM4/LFG4. Interacts with CEMIP. Interacts with TESPA1. Interacts with TMEM203. Interacts with BOK; regulates ITPR3 expression. Interacts with BCL2L10. Interacts with CHGA and CHGB. Phosphorylated by AKT1 on serine and/or threonine residues.

It is found in the endoplasmic reticulum membrane. Its subcellular location is the cytoplasmic vesicle. The protein resides in the secretory vesicle membrane. The catalysed reaction is Ca(2+)(in) = Ca(2+)(out). Its activity is regulated as follows. Inositol 1,4,5-trisphosphate-gated calcium channel is regulated by cytosolic calcium in a biphasic manner. At low concentrations, cytosolic calcium binds at a high-affinity juxtamembrane domain (JD) calcium binding site, allowing ITPR3 to activate by escaping a low-energy resting state through an ensemble of preactivated states. At high cytosolic calcium concentrations, ITPR3 preferentially enters an inhibited state stabilized by calcium binding at a second, low-affinity cytoplasmic domain (CD) calcium binding site. In terms of biological role, inositol 1,4,5-trisphosphate-gated calcium channel that, upon 1D-myo-inositol 1,4,5-trisphosphate binding, transports calcium from the endoplasmic reticulum lumen to cytoplasm, thus releasing the intracellular calcium and therefore participates in cellular calcium ion homeostasis. 1D-myo-inositol 1,4,5-trisphosphate binds to the ligand-free channel without altering its global conformation, yielding the low-energy resting state, then progresses through resting-to preactivated transitions to the higher energy preactivated state, which increases affinity for calcium, promoting binding of the low basal cytosolic calcium at the juxtamembrane domain (JD) site, favoring the transition through the ensemble of high-energy intermediate states along the trajectory to the fully-open activated state. Upon opening, releases calcium in the cytosol where it can bind to the low-affinity cytoplasmic domain (CD) site and stabilizes the inhibited state to terminate calcium release. The chain is Inositol 1,4,5-trisphosphate-gated calcium channel ITPR3 from Mus musculus (Mouse).